The sequence spans 381 residues: Transaldolase 2 (381 aa).

The Schiff-base intermediate with substrate role is filled by K141.

The protein belongs to the transaldolase family. Type 2 subfamily.

The protein localises to the cytoplasm. The catalysed reaction is D-sedoheptulose 7-phosphate + D-glyceraldehyde 3-phosphate = D-erythrose 4-phosphate + beta-D-fructose 6-phosphate. The protein operates within carbohydrate degradation; pentose phosphate pathway; D-glyceraldehyde 3-phosphate and beta-D-fructose 6-phosphate from D-ribose 5-phosphate and D-xylulose 5-phosphate (non-oxidative stage): step 2/3. Functionally, transaldolase is important for the balance of metabolites in the pentose-phosphate pathway. This chain is Transaldolase 2 (tal2), found in Nostoc sp. (strain PCC 7120 / SAG 25.82 / UTEX 2576).